A 406-amino-acid polypeptide reads, in one-letter code: Acetate kinase (406 aa).

Asparagine 7 is a binding site for Mg(2+). Lysine 14 contributes to the ATP binding site. A substrate-binding site is contributed by arginine 90. The Proton donor/acceptor role is filled by aspartate 147. Residues 207 to 211 (HLGNG), 283 to 285 (DMR), and 331 to 335 (GVGEN) each bind ATP. Position 385 (glutamate 385) interacts with Mg(2+).

The protein belongs to the acetokinase family. In terms of assembly, homodimer. The cofactor is Mg(2+). Mn(2+) serves as cofactor.

It is found in the cytoplasm. The catalysed reaction is acetate + ATP = acetyl phosphate + ADP. Its pathway is metabolic intermediate biosynthesis; acetyl-CoA biosynthesis; acetyl-CoA from acetate: step 1/2. Catalyzes the formation of acetyl phosphate from acetate and ATP. Can also catalyze the reverse reaction. The protein is Acetate kinase of Thermosipho melanesiensis (strain DSM 12029 / CIP 104789 / BI429).